The primary structure comprises 373 residues: D-amino-acid transaminase, chloroplastic (373 aa).

A chloroplast-targeting transit peptide spans 1–57 (MAGLSLEFTVNTWNLRSLSQVPCPLRHGFRFPRRLTRRRTILMCSDSSSQSWNVPVL). Arginine 128 is a pyridoxal 5'-phosphate binding site. Lysine 222 (proton acceptor) is an active-site residue. Lysine 222 carries the post-translational modification N6-(pyridoxal phosphate)lysine. Glutamate 255 serves as a coordination point for pyridoxal 5'-phosphate.

It belongs to the class-IV pyridoxal-phosphate-dependent aminotransferase family. Homodimer. The cofactor is pyridoxal 5'-phosphate.

The protein resides in the plastid. The protein localises to the chloroplast. The enzyme catalyses D-alanine + 2-oxoglutarate = D-glutamate + pyruvate. The catalysed reaction is 4-amino-4-deoxychorismate = 4-aminobenzoate + pyruvate + H(+). It functions in the pathway cofactor biosynthesis; tetrahydrofolate biosynthesis; 4-aminobenzoate from chorismate: step 2/2. Inhibited by hydroxylamine or amino-oxyacetic acid. Amino acid aminotransferase showing activity for D-Asp and D-Ala as amino donors with 2-oxoglutarate as an amino acceptor. Can also use D-Met, D-Tyr, D-Phe, D-Gln, D-Trp and D-Asn as substrates, but no activity with L-Asp, L-Ala, L-Leu, L-Ile or L-Val. Also catalyzes the reverse reaction where an amino group is transferred from D-Glu to pyruvate or oxaloacetate to produce D-Ala or D-Asp, respectively. Also involved in folate biosynthesis, acting as an aminodeoxychorismate lyase converting 4-amino-4-deoxychorismate (ADC) to p-aminobenzoate (PABA). The sequence is that of D-amino-acid transaminase, chloroplastic from Arabidopsis thaliana (Mouse-ear cress).